A 106-amino-acid chain; its full sequence is UPF0145 protein Cthe_0398 (106 aa).

The protein belongs to the UPF0145 family.

The sequence is that of UPF0145 protein Cthe_0398 from Acetivibrio thermocellus (strain ATCC 27405 / DSM 1237 / JCM 9322 / NBRC 103400 / NCIMB 10682 / NRRL B-4536 / VPI 7372) (Clostridium thermocellum).